The primary structure comprises 219 residues: Ribose-5-phosphate isomerase A (219 aa).

Residues Thr28–Thr31, Asp81–Asp84, and Lys94–Gly97 contribute to the substrate site. Catalysis depends on Glu103, which acts as the Proton acceptor. Lys121 contributes to the substrate binding site.

It belongs to the ribose 5-phosphate isomerase family. Homodimer.

It carries out the reaction aldehydo-D-ribose 5-phosphate = D-ribulose 5-phosphate. Its pathway is carbohydrate degradation; pentose phosphate pathway; D-ribose 5-phosphate from D-ribulose 5-phosphate (non-oxidative stage): step 1/1. Its function is as follows. Catalyzes the reversible conversion of ribose-5-phosphate to ribulose 5-phosphate. The sequence is that of Ribose-5-phosphate isomerase A from Shigella boydii serotype 18 (strain CDC 3083-94 / BS512).